The chain runs to 121 residues: Large ribosomal subunit protein uL22 (121 aa).

It belongs to the universal ribosomal protein uL22 family. In terms of assembly, part of the 50S ribosomal subunit.

Its function is as follows. This protein binds specifically to 23S rRNA; its binding is stimulated by other ribosomal proteins, e.g. L4, L17, and L20. It is important during the early stages of 50S assembly. It makes multiple contacts with different domains of the 23S rRNA in the assembled 50S subunit and ribosome. The globular domain of the protein is located near the polypeptide exit tunnel on the outside of the subunit, while an extended beta-hairpin is found that lines the wall of the exit tunnel in the center of the 70S ribosome. The sequence is that of Large ribosomal subunit protein uL22 from Synechocystis sp. (strain ATCC 27184 / PCC 6803 / Kazusa).